We begin with the raw amino-acid sequence, 539 residues long: D-mannonate oxidoreductase (539 aa).

Residue 39 to 50 (WVHFGGGNIFRG) coordinates NAD(+).

The protein belongs to the mannitol dehydrogenase family. UxuB subfamily.

It carries out the reaction D-mannonate + NAD(+) = keto-D-fructuronate + NADH + H(+). It functions in the pathway carbohydrate metabolism. Catalyzes the reduction of D-fructuronate (D-FruA) to D-mannonate (D-ManA). The polypeptide is D-mannonate oxidoreductase (Thermotoga maritima (strain ATCC 43589 / DSM 3109 / JCM 10099 / NBRC 100826 / MSB8)).